The sequence spans 340 residues: Phosphoribosylformylglycinamidine cyclo-ligase (340 aa).

Belongs to the AIR synthase family.

The protein resides in the cytoplasm. It catalyses the reaction 2-formamido-N(1)-(5-O-phospho-beta-D-ribosyl)acetamidine + ATP = 5-amino-1-(5-phospho-beta-D-ribosyl)imidazole + ADP + phosphate + H(+). Its pathway is purine metabolism; IMP biosynthesis via de novo pathway; 5-amino-1-(5-phospho-D-ribosyl)imidazole from N(2)-formyl-N(1)-(5-phospho-D-ribosyl)glycinamide: step 2/2. This Streptococcus agalactiae serotype Ia (strain ATCC 27591 / A909 / CDC SS700) protein is Phosphoribosylformylglycinamidine cyclo-ligase.